A 322-amino-acid chain; its full sequence is Phosphatidylserine decarboxylase proenzyme (322 aa).

Catalysis depends on charge relay system; for autoendoproteolytic cleavage activity residues aspartate 90, histidine 147, and serine 254. Residue serine 254 is the Schiff-base intermediate with substrate; via pyruvic acid; for decarboxylase activity of the active site. Serine 254 bears the Pyruvic acid (Ser); by autocatalysis mark. Residues 293-322 form a disordered region; it reads PDAEPAPLPAEEIEAEHDASPLIDDKKDQV. The segment covering 308-322 has biased composition (basic and acidic residues); the sequence is EHDASPLIDDKKDQV.

This sequence belongs to the phosphatidylserine decarboxylase family. PSD-B subfamily. Prokaryotic type I sub-subfamily. In terms of assembly, heterodimer of a large membrane-associated beta subunit and a small pyruvoyl-containing alpha subunit. Pyruvate serves as cofactor. Is synthesized initially as an inactive proenzyme. Formation of the active enzyme involves a self-maturation process in which the active site pyruvoyl group is generated from an internal serine residue via an autocatalytic post-translational modification. Two non-identical subunits are generated from the proenzyme in this reaction, and the pyruvate is formed at the N-terminus of the alpha chain, which is derived from the carboxyl end of the proenzyme. The autoendoproteolytic cleavage occurs by a canonical serine protease mechanism, in which the side chain hydroxyl group of the serine supplies its oxygen atom to form the C-terminus of the beta chain, while the remainder of the serine residue undergoes an oxidative deamination to produce ammonia and the pyruvoyl prosthetic group on the alpha chain. During this reaction, the Ser that is part of the protease active site of the proenzyme becomes the pyruvoyl prosthetic group, which constitutes an essential element of the active site of the mature decarboxylase.

It localises to the cell membrane. It catalyses the reaction a 1,2-diacyl-sn-glycero-3-phospho-L-serine + H(+) = a 1,2-diacyl-sn-glycero-3-phosphoethanolamine + CO2. It participates in phospholipid metabolism; phosphatidylethanolamine biosynthesis; phosphatidylethanolamine from CDP-diacylglycerol: step 2/2. In terms of biological role, catalyzes the formation of phosphatidylethanolamine (PtdEtn) from phosphatidylserine (PtdSer). This Escherichia coli O127:H6 (strain E2348/69 / EPEC) protein is Phosphatidylserine decarboxylase proenzyme.